A 342-amino-acid polypeptide reads, in one-letter code: Nucleoid-associated protein Spea_1765 (342 aa).

Belongs to the YejK family.

It is found in the cytoplasm. It localises to the nucleoid. The chain is Nucleoid-associated protein Spea_1765 from Shewanella pealeana (strain ATCC 700345 / ANG-SQ1).